The chain runs to 98 residues: NADH-ubiquinone oxidoreductase chain 4L (98 aa).

3 helical membrane passes run 1–21 (MSPM…GLAF), 26–46 (LLSA…ATAT), and 58–78 (ILPM…LAIL).

The protein belongs to the complex I subunit 4L family.

It localises to the mitochondrion membrane. It catalyses the reaction a ubiquinone + NADH + 5 H(+)(in) = a ubiquinol + NAD(+) + 4 H(+)(out). Functionally, core subunit of the mitochondrial membrane respiratory chain NADH dehydrogenase (Complex I) which catalyzes electron transfer from NADH through the respiratory chain, using ubiquinone as an electron acceptor. Part of the enzyme membrane arm which is embedded in the lipid bilayer and involved in proton translocation. In Scyliorhinus canicula (Small-spotted catshark), this protein is NADH-ubiquinone oxidoreductase chain 4L (MT-ND4L).